The following is an 880-amino-acid chain: Alanine--tRNA ligase (880 aa).

4 residues coordinate Zn(2+): H568, H572, C670, and H674.

The protein belongs to the class-II aminoacyl-tRNA synthetase family. Zn(2+) is required as a cofactor.

It is found in the cytoplasm. The catalysed reaction is tRNA(Ala) + L-alanine + ATP = L-alanyl-tRNA(Ala) + AMP + diphosphate. In terms of biological role, catalyzes the attachment of alanine to tRNA(Ala) in a two-step reaction: alanine is first activated by ATP to form Ala-AMP and then transferred to the acceptor end of tRNA(Ala). Also edits incorrectly charged Ser-tRNA(Ala) and Gly-tRNA(Ala) via its editing domain. This is Alanine--tRNA ligase from Exiguobacterium sibiricum (strain DSM 17290 / CCUG 55495 / CIP 109462 / JCM 13490 / 255-15).